We begin with the raw amino-acid sequence, 363 residues long: 3-isopropylmalate dehydrogenase (363 aa).

An NAD(+)-binding site is contributed by 78–91; it reads GPKWEHLPPDQQPE. 4 residues coordinate substrate: arginine 99, arginine 109, arginine 138, and aspartate 227. 3 residues coordinate Mg(2+): aspartate 227, aspartate 251, and aspartate 255. NAD(+) is bound at residue 285 to 297; that stretch reads GSAPDITGKNIAN.

It belongs to the isocitrate and isopropylmalate dehydrogenases family. LeuB type 1 subfamily. As to quaternary structure, homodimer. Requires Mg(2+) as cofactor. The cofactor is Mn(2+).

The protein resides in the cytoplasm. It catalyses the reaction (2R,3S)-3-isopropylmalate + NAD(+) = 4-methyl-2-oxopentanoate + CO2 + NADH. The protein operates within amino-acid biosynthesis; L-leucine biosynthesis; L-leucine from 3-methyl-2-oxobutanoate: step 3/4. Catalyzes the oxidation of 3-carboxy-2-hydroxy-4-methylpentanoate (3-isopropylmalate) to 3-carboxy-4-methyl-2-oxopentanoate. The product decarboxylates to 4-methyl-2 oxopentanoate. This is 3-isopropylmalate dehydrogenase from Shigella boydii serotype 4 (strain Sb227).